Consider the following 413-residue polypeptide: Phosphatidylcholine-sterol acyltransferase (413 aa).

An N-terminal signal peptide occupies residues 1 to 22; the sequence is GRTGAGFTLLTLLLLLPQPTSQ. A disulfide bridge links Cys-72 with Cys-96. Asn-106 is a glycosylation site (N-linked (GlcNAc...) asparagine). The active-site Charge relay system is the Ser-203. The active-site Nucleophile is the Ser-203. N-linked (GlcNAc...) asparagine glycosylation occurs at Asn-294. A disulfide bridge connects residues Cys-335 and Cys-378. Residues Asp-367 and His-399 each act as charge relay system in the active site. N-linked (GlcNAc...) asparagine glycosylation occurs at Asn-406.

It belongs to the AB hydrolase superfamily. Lipase family. In terms of tissue distribution, detected in blood plasma (at protein level). Expressed in liver, brain and adrenal glands. Lower expression in testes. In laying hens, expressed higher in brain than in liver. In roosters, higher levels in liver than in brain.

The protein localises to the secreted. It carries out the reaction a sterol + a 1,2-diacyl-sn-glycero-3-phosphocholine = a sterol ester + a 1-acyl-sn-glycero-3-phosphocholine. Its activity is regulated as follows. APOA1 is the most potent activator in plasma. Also activated by APOE, APOC1 and APOA4. Central enzyme in the extracellular metabolism of plasma lipoproteins. Synthesized mainly in the liver and secreted into plasma where it converts cholesterol and phosphatidylcholines (lecithins) to cholesteryl esters and lysophosphatidylcholines on the surface of high and low density lipoproteins (HDLs and LDLs). The cholesterol ester is then transported back to the liver. Also produced in the brain by primary astrocytes, and esterifies free cholesterol on nascent APOE-containing lipoproteins secreted from glia and influences cerebral spinal fluid (CSF) APOE- and APOA1 levels. Together with APOE and the cholesterol transporter ABCA1, plays a key role in the maturation of glial-derived, nascent lipoproteins. Required for remodeling high-density lipoprotein particles into their spherical forms. Has a preference for plasma 16:0-18:2 or 18:O-18:2 phosphatidylcholines. In Gallus gallus (Chicken), this protein is Phosphatidylcholine-sterol acyltransferase (LCAT).